The primary structure comprises 450 residues: UDP-N-acetylmuramoylalanine--D-glutamate ligase (450 aa).

119–125 (GSNGKTT) is an ATP binding site.

The protein belongs to the MurCDEF family.

It is found in the cytoplasm. The catalysed reaction is UDP-N-acetyl-alpha-D-muramoyl-L-alanine + D-glutamate + ATP = UDP-N-acetyl-alpha-D-muramoyl-L-alanyl-D-glutamate + ADP + phosphate + H(+). Its pathway is cell wall biogenesis; peptidoglycan biosynthesis. Cell wall formation. Catalyzes the addition of glutamate to the nucleotide precursor UDP-N-acetylmuramoyl-L-alanine (UMA). The sequence is that of UDP-N-acetylmuramoylalanine--D-glutamate ligase from Streptococcus thermophilus (strain ATCC BAA-491 / LMD-9).